A 325-amino-acid chain; its full sequence is Formimidoylglutamase (325 aa).

H125, D155, H157, D159, C246, and D248 together coordinate Mn(2+).

Belongs to the arginase family. Mn(2+) is required as a cofactor.

The enzyme catalyses N-formimidoyl-L-glutamate + H2O = formamide + L-glutamate. Its pathway is amino-acid degradation; L-histidine degradation into L-glutamate; L-glutamate from N-formimidoyl-L-glutamate (hydrolase route): step 1/1. Functionally, catalyzes the conversion of N-formimidoyl-L-glutamate to L-glutamate and formamide. The sequence is that of Formimidoylglutamase from Ralstonia nicotianae (strain ATCC BAA-1114 / GMI1000) (Ralstonia solanacearum).